The chain runs to 479 residues: Aspartyl/glutamyl-tRNA(Asn/Gln) amidotransferase subunit B (479 aa).

This sequence belongs to the GatB/GatE family. GatB subfamily. Heterotrimer of A, B and C subunits.

It carries out the reaction L-glutamyl-tRNA(Gln) + L-glutamine + ATP + H2O = L-glutaminyl-tRNA(Gln) + L-glutamate + ADP + phosphate + H(+). It catalyses the reaction L-aspartyl-tRNA(Asn) + L-glutamine + ATP + H2O = L-asparaginyl-tRNA(Asn) + L-glutamate + ADP + phosphate + 2 H(+). In terms of biological role, allows the formation of correctly charged Asn-tRNA(Asn) or Gln-tRNA(Gln) through the transamidation of misacylated Asp-tRNA(Asn) or Glu-tRNA(Gln) in organisms which lack either or both of asparaginyl-tRNA or glutaminyl-tRNA synthetases. The reaction takes place in the presence of glutamine and ATP through an activated phospho-Asp-tRNA(Asn) or phospho-Glu-tRNA(Gln). The chain is Aspartyl/glutamyl-tRNA(Asn/Gln) amidotransferase subunit B from Streptococcus pyogenes serotype M28 (strain MGAS6180).